A 408-amino-acid chain; its full sequence is MIPPEPPQPQLQPPPPPAPPNHVVTTIENLPAEGSGGVSLSASSRASMRQRIRKVLNREMLISVALGQVLSLLVCGIGLTSKYLAEDFHANTPVFQSFLNYILLFLVYTTTLAVRQGEENLLAILRRRWWKYMILGLIDLEANYLVVKAYQYTTLTSVQLLDCFVIPVVILLSWFFLLIRYKAVHFIGIVVCILGMGCMVGADVLVGRHQGAGENKLVGDLLVLGGATLYGISNVWEESIIRTLSRVEFLGMIGLFGAFFSGIQLAIMEHKELLKVPWDWQIGLLYVGFSACMFGLYSFMPVVIKKTSATSVNLSLLTADLYSLFCGLFLFHYKFSGLYLLSFFTILIGLVLYSSTSTYIAQDPRVYKQFRNPSGPVVDLPSTAQVEPSVTYTSLGQETEEEPHVRVA.

The tract at residues 1–20 (MIPPEPPQPQLQPPPPPAPP) is disordered. A run of 10 helical transmembrane segments spans residues 60–80 (MLIS…IGLT), 94–114 (VFQS…TLAV), 129–147 (WWKY…YLVV), 159–179 (QLLD…FLLI), 186–206 (FIGI…DVLV), 221–241 (LLVL…ESII), 247–267 (VEFL…QLAI), 284–304 (LLYV…PVVI), 311–331 (SVNL…LFLF), and 335–355 (FSGL…LYSS).

The protein belongs to the SLC35F solute transporter family.

It localises to the cytoplasmic vesicle. The protein resides in the secretory vesicle. Its subcellular location is the synaptic vesicle membrane. Putative solute transporter. This Mus musculus (Mouse) protein is Solute carrier family 35 member F1 (Slc35f1).